The primary structure comprises 160 residues: Envelope glycoprotein L (160 aa).

The first 22 residues, 1–22, serve as a signal peptide directing secretion; it reads MASHKWLLQMIVFLKTITIAYC. The interval 24 to 149 is interaction with gH; sequence HLQDDTPLFF…TNIPENGCVW (126 aa). The gL alphaherpesvirus-type domain occupies 28–160; it reads DTPLFFGAKP…ADRLFQRVCQ (133 aa). Cystine bridges form between C49/C80 and C147/C159.

The protein belongs to the herpesviridae glycoprotein L (gL) family. Alphaherpesvirinae gL subfamily. As to quaternary structure, interacts with glycoprotein H (gH); this interaction is necessary for the correct processing and cell surface expression of gH. The heterodimer gH/gL seems to interact with gB trimers during fusion.

The protein resides in the virion membrane. It is found in the host cell membrane. It localises to the host Golgi apparatus. The protein localises to the host trans-Golgi network. In terms of biological role, the heterodimer glycoprotein H-glycoprotein L is required for the fusion of viral and plasma membranes leading to virus entry into the host cell. Acts as a functional inhibitor of gH and maintains gH in an inhibited form. Upon binding to host integrins, gL dissociates from gH leading to activation of the viral fusion glycoproteins gB and gH. In Varicella-zoster virus (strain Oka vaccine) (HHV-3), this protein is Envelope glycoprotein L.